We begin with the raw amino-acid sequence, 160 residues long: Cytochrome b6-f complex subunit 4 (160 aa).

Helical transmembrane passes span 36–56, 95–115, and 131–151; these read LLYI…GLAV, LLGI…PFIE, and SVFL…CLPI.

Belongs to the cytochrome b family. PetD subfamily. In terms of assembly, the 4 large subunits of the cytochrome b6-f complex are cytochrome b6, subunit IV (17 kDa polypeptide, PetD), cytochrome f and the Rieske protein, while the 4 small subunits are PetG, PetL, PetM and PetN. The complex functions as a dimer.

Its subcellular location is the cellular thylakoid membrane. Component of the cytochrome b6-f complex, which mediates electron transfer between photosystem II (PSII) and photosystem I (PSI), cyclic electron flow around PSI, and state transitions. In Prochlorococcus marinus subsp. pastoris (strain CCMP1986 / NIES-2087 / MED4), this protein is Cytochrome b6-f complex subunit 4.